A 493-amino-acid polypeptide reads, in one-letter code: Glycerol kinase (493 aa).

ADP is bound at residue Thr-12. 3 residues coordinate ATP: Thr-12, Thr-13, and Ser-14. Thr-12 lines the sn-glycerol 3-phosphate pocket. Arg-16 is an ADP binding site. Residues Arg-82, Glu-83, Tyr-132, and Asp-239 each contribute to the sn-glycerol 3-phosphate site. The glycerol site is built by Arg-82, Glu-83, Tyr-132, Asp-239, and Gln-240. Residues Thr-261 and Gly-303 each contribute to the ADP site. Thr-261, Gly-303, Gln-307, and Gly-402 together coordinate ATP. The ADP site is built by Gly-402 and Asn-406.

This sequence belongs to the FGGY kinase family.

The enzyme catalyses glycerol + ATP = sn-glycerol 3-phosphate + ADP + H(+). It functions in the pathway polyol metabolism; glycerol degradation via glycerol kinase pathway; sn-glycerol 3-phosphate from glycerol: step 1/1. In terms of biological role, key enzyme in the regulation of glycerol uptake and metabolism. Catalyzes the phosphorylation of glycerol to yield sn-glycerol 3-phosphate. In Thermococcus onnurineus (strain NA1), this protein is Glycerol kinase.